The primary structure comprises 549 residues: Chaperonin GroEL (549 aa).

Residues 29–32, Lys-50, 86–90, Gly-417, and Asp-499 contribute to the ATP site; these read TAGP and DGTTT.

The protein belongs to the chaperonin (HSP60) family. Forms a cylinder of 14 subunits composed of two heptameric rings stacked back-to-back. Interacts with the co-chaperonin GroES.

Its subcellular location is the cytoplasm. The enzyme catalyses ATP + H2O + a folded polypeptide = ADP + phosphate + an unfolded polypeptide.. In terms of biological role, together with its co-chaperonin GroES, plays an essential role in assisting protein folding. The GroEL-GroES system forms a nano-cage that allows encapsulation of the non-native substrate proteins and provides a physical environment optimized to promote and accelerate protein folding. In Anaplasma marginale (strain Florida), this protein is Chaperonin GroEL.